The primary structure comprises 371 residues: Cytochrome b (371 aa).

A run of 4 helical transmembrane segments spans residues 25–45 (FGSM…FLAV), 69–90 (WMMQ…YIHI), 105–125 (WLSG…GYVL), and 170–190 (FSAL…LHIM). Positions 75 and 89 each coordinate heme b. Positions 174 and 188 each coordinate heme b. A ubiquinone is bound at residue His-193. A run of 4 helical transmembrane segments spans residues 218-238 (YKDL…VSFL), 280-300 (LGGA…PFTH), 312-332 (IMQL…WSAT), and 339-358 (FTVI…IMNP).

Belongs to the cytochrome b family. The cytochrome bc1 complex contains 3 respiratory subunits (MT-CYB, CYC1 and UQCRFS1), 2 core proteins (UQCRC1 and UQCRC2) and probably 6 low-molecular weight proteins. Requires heme b as cofactor.

It localises to the mitochondrion inner membrane. Functionally, component of the ubiquinol-cytochrome c reductase complex (complex III or cytochrome b-c1 complex) that is part of the mitochondrial respiratory chain. The b-c1 complex mediates electron transfer from ubiquinol to cytochrome c. Contributes to the generation of a proton gradient across the mitochondrial membrane that is then used for ATP synthesis. The sequence is that of Cytochrome b (MT-CYB) from Eryx elegans (Central Asian sand boa).